A 269-amino-acid polypeptide reads, in one-letter code: MANICANMKRCFSPPALRAYFAEFFSTFLFVFIAVGSTISARMLTPDETSDASSLMATAVAQAFGLFAAVFIAADVSGGHVNPAVTFAYAIGGHITVPSAIFYWASQMLGSTFACLVLHYISAGQAVPTTRIAVEMTGFGAGILEGVLTFMVVYTVHVAGDPRGGGFGGRKGPAATALGALVVGAVTGACVLAAGSLTGASMNPARSFGPAVVSGHYSNQAVYWAGPMVGAAVAALVHQALVFPTVPEPAPAPATNESARHGSVQTVVV.

5 helical membrane passes run 19 to 39, 54 to 74, 84 to 104, 139 to 159, and 177 to 197; these read AYFA…GSTI, SLMA…FIAA, AVTF…IFYW, FGAG…VHVA, and ALGA…AGSL. The NPA 1 motif lies at 82 to 84; sequence NPA. Residues 203–205 carry the NPA 2 motif; that stretch reads NPA. The helical transmembrane segment at 223–243 threads the bilayer; that stretch reads YWAGPMVGAAVAALVHQALVF.

It belongs to the MIP/aquaporin (TC 1.A.8) family. TIP (TC 1.A.8.10) subfamily. As to expression, expressed in leaves and anthers, and at lower levels in roots.

Its subcellular location is the vacuole membrane. Its function is as follows. Aquaporins facilitate the transport of water and small neutral solutes across cell membranes. May be involved in transport from the vacuolar compartment to the cytoplasm. This is Probable aquaporin TIP5-1 (TIP5;1) from Oryza sativa subsp. japonica (Rice).